A 171-amino-acid chain; its full sequence is Mitochondrial import inner membrane translocase subunit Tim17-A (171 aa).

The cysteines at positions 9 and 78 are disulfide-linked. Helical transmembrane passes span 17–37 (CGGA…FKGF), 63–77 (GGSF…STID), and 113–133 (VGSA…GILL). Residues 144–171 (GPQFTEDHSQLPSSQLPSSPFGDYRQYQ) form a disordered region. Residues 153 to 163 (QLPSSQLPSSP) are compositionally biased toward low complexity.

The protein belongs to the Tim17/Tim22/Tim23 family. As to quaternary structure, component of the TIM23 complex at least composed of TIMM23, TIMM17 (TIMM17A or TIMM17B) and TIMM50. The complex interacts with the TIMM44 component of the PAM complex and with DNAJC15. Degraded by YMEL1 downstream of the integrated stress response (ISR).

It is found in the mitochondrion inner membrane. In terms of biological role, essential component of the TIM23 complex, a complex that mediates the translocation of transit peptide-containing proteins across the mitochondrial inner membrane. This Mus musculus (Mouse) protein is Mitochondrial import inner membrane translocase subunit Tim17-A (Timm17a).